The following is a 388-amino-acid chain: Oligogalacturonide lyase (388 aa).

The protein resides in the periplasm. The catalysed reaction is 4-(4-deoxy-alpha-D-galact-4-enuronosyl)-D-galacturonate = 2 5-dehydro-4-deoxy-D-glucuronate. The protein operates within glycan metabolism; pectin degradation; 2-dehydro-3-deoxy-D-gluconate from pectin: step 3/5. Involved in degradation of pectin, which causes soft-rod disease in plants. This is Oligogalacturonide lyase (ogl) from Pectobacterium atrosepticum (strain SCRI 1043 / ATCC BAA-672) (Erwinia carotovora subsp. atroseptica).